The following is a 321-amino-acid chain: AA9 family lytic polysaccharide monooxygenase C (321 aa).

A signal peptide spans 1 to 18 (MKLQLIIPFSFLISYVSA). Cu(2+) is bound at residue His-19. Residue Asn-33 is glycosylated (N-linked (GlcNAc...) asparagine). 2 disulfide bridges follow: Cys-57/Cys-191 and Cys-161/Cys-242. Residue His-103 participates in Cu(2+) binding. O2 contacts are provided by His-177 and Gln-186. Tyr-188 is a binding site for Cu(2+). The N-linked (GlcNAc...) asparagine glycan is linked to Asn-195. Residues 283–319 (GTAAIYAQCGGQGWTGATVCASGSKCVVSSAFYSQCL) form the CBM1 domain.

The protein belongs to the polysaccharide monooxygenase AA9 family. It depends on Cu(2+) as a cofactor.

It localises to the secreted. It catalyses the reaction [(1-&gt;4)-beta-D-glucosyl]n+m + reduced acceptor + O2 = 4-dehydro-beta-D-glucosyl-[(1-&gt;4)-beta-D-glucosyl]n-1 + [(1-&gt;4)-beta-D-glucosyl]m + acceptor + H2O.. Functionally, major lytic polysaccharide monooxygenase (LPMO) that depolymerizes crystalline and amorphous polysaccharides via the oxidation of scissile alpha- or beta-(1-4)-glycosidic bonds, yielding C1 and C4 oxidation products. Catalysis by LPMOs requires the reduction of the active-site copper from Cu(II) to Cu(I) by a reducing agent and H(2)O(2) or O(2) as a cosubstrate. The polypeptide is AA9 family lytic polysaccharide monooxygenase C (Botryotinia fuckeliana (strain B05.10) (Noble rot fungus)).